The chain runs to 174 residues: Cytoglobin-1 (174 aa).

A Globin domain is found at 15-165; it reads SLTEEDVCVI…LYWQMNRVYA (151 aa). Heme b-binding residues include histidine 78 and histidine 110.

This sequence belongs to the globin family. As to quaternary structure, monomeric. Expressed in all tissues examined with highest levels in brain, eye, gut and heart.

The protein resides in the cytoplasm. It localises to the nucleus. The catalysed reaction is Fe(II)-heme b-[protein] + nitric oxide + O2 = Fe(III)-heme b-[protein] + nitrate. The enzyme catalyses Fe(III)-heme b-[protein] + nitric oxide + H2O = Fe(II)-heme b-[protein] + nitrite + 2 H(+). It catalyses the reaction 2 superoxide + 2 H(+) = H2O2 + O2. It carries out the reaction H2O2 + AH2 = A + 2 H2O. In terms of biological role, probable multifunctional globin with a hexacoordinated heme iron required for the catalysis of various reactions depending on redox condition of the cell as well as oxygen availability. Has a nitric oxide dioxygenase (NOD) activity and is most probably involved in cell-mediated and oxygen-dependent nitric oxide consumption. Under normoxic conditions functions as a nitric oxide dioxygenase (NOD) but under hypoxic conditions the globin may switch its function to that of a nitrite (NO2) reductase (NiR), generating nitric oxide. Could also have peroxidase and superoxide dismutase activities, detoxifying reactive oxygen species and protecting cells against oxidative stress. Also binds dioxygen with low affinity and could function as an oxygen sensor but has probably no function as a respiratory oxygen carrier. The sequence is that of Cytoglobin-1 (cygb1) from Danio rerio (Zebrafish).